The primary structure comprises 226 residues: MSETAPAETATPAPVEKSPAKKKATKKAAGAGAAKRKATGPPVSELITKAVAASKERNGLSLAALKKALAAGGYDVEKNNSRIKLGLKSLVSKGTLVQTKGTGASGSFKLNKKAASGEAKPKAKKAGAAKAKKPAGATPKKAKKAAGAKKAVKKTPKKAKKPAAAGVKKVAKSPKKAKAAAKPKKATKSPAKPKAVKPKAAKPKAAKPKAAKPKAAKAKKAAAKKK.

Residues 1-16 (MSETAPAETATPAPVE) are compositionally biased toward low complexity. Residues 1-44 (MSETAPAETATPAPVEKSPAKKKATKKAAGAGAAKRKATGPPVS) are disordered. N-acetylserine; partial is present on Ser2. Ser2 carries the post-translational modification Phosphoserine. Thr11 is modified (phosphothreonine; by GSK3). At Lys17 the chain carries N6-acetyllysine. Residue Ser18 is modified to Phosphoserine. Lys27 is subject to N6-methyllysine. Residue Lys37 is modified to N6-(beta-hydroxybutyryl)lysine; alternate. Residue Lys37 is modified to N6-succinyllysine; alternate. The residue at position 39 (Thr39) is a Phosphothreonine. The H15 domain maps to 39 to 112 (TGPPVSELIT…GASGSFKLNK (74 aa)). Lys49 is subject to N6-acetyllysine. An N6-(beta-hydroxybutyryl)lysine modification is found at Lys55. Position 57 is a citrulline (Arg57). Lys67 is modified (N6-(beta-hydroxybutyryl)lysine). Lys78 carries the N6-acetyllysine modification. An N6-(beta-hydroxybutyryl)lysine mark is found at Lys88, Lys93, and Lys109. Residues 98 to 226 (QTKGTGASGS…KAKKAAAKKK (129 aa)) form a disordered region. Over residues 122–133 (KAKKAGAAKAKK) the composition is skewed to basic residues. Thr138 and Thr155 each carry phosphothreonine. The segment covering 140-161 (KKAKKAAGAKKAVKKTPKKAKK) has biased composition (basic residues). Position 168 is an N6-acetyllysine (Lys168). The span at 169 to 187 (KVAKSPKKAKAAAKPKKAT) shows a compositional bias: basic residues. Phosphoserine is present on residues Ser173 and Ser189. The span at 194 to 226 (KAVKPKAAKPKAAKPKAAKPKAAKAKKAAAKKK) shows a compositional bias: basic residues.

Belongs to the histone H1/H5 family. Interacts with MSX1. Post-translationally, H1 histones are progressively phosphorylated during the cell cycle, becoming maximally phosphorylated during late G2 phase and M phase, and being dephosphorylated sharply thereafter. Phosphorylated at Thr-11 by GSK3B during mitosis in prometaphase and dephosphorylated in telophase. In terms of processing, citrullination at Arg-57 (H1R54ci) by PADI4 takes place within the DNA-binding site of H1 and results in its displacement from chromatin and global chromatin decondensation, thereby promoting pluripotency and stem cell maintenance. In terms of tissue distribution, ubiquitous. Expressed in the majority of the cell lines tested and in testis.

Its subcellular location is the nucleus. It localises to the chromosome. Functionally, histone H1 protein binds to linker DNA between nucleosomes forming the macromolecular structure known as the chromatin fiber. Histones H1 are necessary for the condensation of nucleosome chains into higher-order structured fibers. Also acts as a regulator of individual gene transcription through chromatin remodeling, nucleosome spacing and DNA methylation. This is Histone H1.5 from Homo sapiens (Human).